The sequence spans 263 residues: 3-methyl-2-oxobutanoate hydroxymethyltransferase (263 aa).

2 residues coordinate Mg(2+): D45 and D84. Residues 45–46 (DS), D84, and K112 each bind 3-methyl-2-oxobutanoate. E114 is a binding site for Mg(2+). E180 functions as the Proton acceptor in the catalytic mechanism.

It belongs to the PanB family. Homodecamer; pentamer of dimers. Requires Mg(2+) as cofactor.

Its subcellular location is the cytoplasm. The catalysed reaction is 3-methyl-2-oxobutanoate + (6R)-5,10-methylene-5,6,7,8-tetrahydrofolate + H2O = 2-dehydropantoate + (6S)-5,6,7,8-tetrahydrofolate. It functions in the pathway cofactor biosynthesis; (R)-pantothenate biosynthesis; (R)-pantoate from 3-methyl-2-oxobutanoate: step 1/2. In terms of biological role, catalyzes the reversible reaction in which hydroxymethyl group from 5,10-methylenetetrahydrofolate is transferred onto alpha-ketoisovalerate to form ketopantoate. This Salmonella arizonae (strain ATCC BAA-731 / CDC346-86 / RSK2980) protein is 3-methyl-2-oxobutanoate hydroxymethyltransferase.